The sequence spans 265 residues: Zinc transporter ZupT (265 aa).

Helical transmembrane passes span 6-26, 37-57, 77-97, 122-142, 150-170, 184-204, 208-228, and 245-265; these read IAFA…GGAL, FMAA…FMEI, WTMM…DRLV, GMFT…ATFL, IAIP…IAVA, FWWA…GFAL, FIGP…MVFI, and CAIY…ALFI. 2 residues coordinate Fe(2+): N133 and E136. E136 and H161 together coordinate Zn(2+). Positions 162, 165, and 194 each coordinate Fe(2+). Residue E165 participates in Zn(2+) binding.

It belongs to the ZIP transporter (TC 2.A.5) family. ZupT subfamily.

It localises to the cell membrane. The enzyme catalyses Zn(2+)(in) = Zn(2+)(out). Functionally, mediates zinc uptake. May also transport other divalent cations. This is Zinc transporter ZupT from Corynebacterium aurimucosum (strain ATCC 700975 / DSM 44827 / CIP 107346 / CN-1) (Corynebacterium nigricans).